Here is a 185-residue protein sequence, read N- to C-terminus: Ribosome-recycling factor (185 aa).

Belongs to the RRF family.

The protein localises to the cytoplasm. Responsible for the release of ribosomes from messenger RNA at the termination of protein biosynthesis. May increase the efficiency of translation by recycling ribosomes from one round of translation to another. The protein is Ribosome-recycling factor of Shewanella halifaxensis (strain HAW-EB4).